The chain runs to 185 residues: Endoribonuclease YbeY (185 aa).

Zn(2+) contacts are provided by His-135, His-139, and His-145.

The protein belongs to the endoribonuclease YbeY family. Zn(2+) serves as cofactor.

The protein resides in the cytoplasm. Functionally, single strand-specific metallo-endoribonuclease involved in late-stage 70S ribosome quality control and in maturation of the 3' terminus of the 16S rRNA. The sequence is that of Endoribonuclease YbeY from Parasynechococcus marenigrum (strain WH8102).